The following is a 361-amino-acid chain: 3-dehydroquinate synthase (361 aa).

NAD(+)-binding positions include Gly-107–Asp-111, Thr-131–Ser-132, Lys-144, and Lys-153. Residues Glu-186, His-251, and His-268 each coordinate Zn(2+).

Belongs to the sugar phosphate cyclases superfamily. Dehydroquinate synthase family. NAD(+) is required as a cofactor. It depends on Co(2+) as a cofactor. Zn(2+) serves as cofactor.

It is found in the cytoplasm. The enzyme catalyses 7-phospho-2-dehydro-3-deoxy-D-arabino-heptonate = 3-dehydroquinate + phosphate. Its pathway is metabolic intermediate biosynthesis; chorismate biosynthesis; chorismate from D-erythrose 4-phosphate and phosphoenolpyruvate: step 2/7. Its function is as follows. Catalyzes the conversion of 3-deoxy-D-arabino-heptulosonate 7-phosphate (DAHP) to dehydroquinate (DHQ). The protein is 3-dehydroquinate synthase of Synechocystis sp. (strain ATCC 27184 / PCC 6803 / Kazusa).